We begin with the raw amino-acid sequence, 488 residues long: MGEPDPLVSGQLAARRSWCLRRLGMDCEWLQLEAGTEVTIGRGLSVTYQLISKVCPLMISRSHCVLKQNPEGQWTIMDNKSLNGVWLNRERLAPLQGYCIRKGDHIQLGVPLESRETAEYEYEVIEEDWESLAPCLAPKNDQRMEKHKGSRTKRKFSSPGLENLPAEGSSDLRCPLANVASKPIEPEKLHGKGDASSQSLGCLCPGLTSLKASERAAGPHACSALPKVLELSCPKKQKACRPSASQNSLELFKVTMSRMLKLKTQMQEKQIAVLNVKRQTRKGSSKKIVRMEKELRNLQSQLYAEQAQQQARVEQLEKTFQEEAHYLQGLEKEQGECDLKQQLVQALQEHQALMEELNCSKKDFEKIIQAKNKELEQTKEEKDKVQAQKEEVLSHMNDLLENELQCIICSEYFIEAVTLNCAHSFCSFCINEWMKRKVECPICRKDIESRTNSLVLDNCISKMVDNLSSDVKERRSVLIRERRAKRLS.

One can recognise an FHA domain in the interval 38–92 (VTIGRGLSVTYQLISKVCPLMISRSHCVLKQNPEGQWTIMDNKSLNGVWLNRERL). A required for interaction with PIWIL1 region spans residues 68 to 72 (QNPEG). The segment at 141 to 164 (DQRMEKHKGSRTKRKFSSPGLENL) is disordered. Over residues 145 to 156 (EKHKGSRTKRKF) the composition is skewed to basic residues. A Phosphoserine modification is found at Ser-157. The segment at 406–444 (CIICSEYFIEAVTLNCAHSFCSFCINEWMKRKVECPICR) adopts an RING-type zinc-finger fold.

Belongs to the RNF8 family. Homodimer. Forms a E2-E3 ubiquitin ligase complex composed of the RNF8 homodimer and a E2 heterodimer of UBE2N and UBE2V2. Interacts with class III E2s, including UBE2E1, UBE2E2, and UBE2E3 and with UBE2N. Interacts with RXRA. Interacts (via FHA domain) with ATM-phosphorylated MDC1. Interacts (via FHA domain) with 'Thr-4829' phosphorylated HERC2 (via C-terminus). Interacts with PIWIL1; leading to sequester RNF8 in the cytoplasm. Interacts with WRAP53/TCAB1. As to quaternary structure, (Microbial infection) May interact with the L.monocytogenes protein actA; however, given these errors in the sequence (AJ242721), the relevance of the interaction with actA remains to be confirmed. Autoubiquitinated through 'Lys-48' and 'Lys-63' of ubiquitin. 'Lys-63' polyubiquitination is mediated by UBE2N. 'Lys-29'-type polyubiquitination is also observed, but it doesn't require its own functional RING-type zinc finger.

It is found in the nucleus. The protein localises to the cytoplasm. Its subcellular location is the midbody. It localises to the chromosome. The protein resides in the telomere. The catalysed reaction is S-ubiquitinyl-[E2 ubiquitin-conjugating enzyme]-L-cysteine + [acceptor protein]-L-lysine = [E2 ubiquitin-conjugating enzyme]-L-cysteine + N(6)-ubiquitinyl-[acceptor protein]-L-lysine.. The protein operates within protein modification; protein ubiquitination. Functionally, E3 ubiquitin-protein ligase that plays a key role in DNA damage signaling via 2 distinct roles: by mediating the 'Lys-63'-linked ubiquitination of histones H2A and H2AX and promoting the recruitment of DNA repair proteins at double-strand breaks (DSBs) sites, and by catalyzing 'Lys-48'-linked ubiquitination to remove target proteins from DNA damage sites. Following DNA DSBs, it is recruited to the sites of damage by ATM-phosphorylated MDC1 and catalyzes the 'Lys-63'-linked ubiquitination of histones H2A and H2AX, thereby promoting the formation of TP53BP1 and BRCA1 ionizing radiation-induced foci (IRIF). Also controls the recruitment of UIMC1-BRCC3 (RAP80-BRCC36) and PAXIP1/PTIP to DNA damage sites. Promotes the recruitment of NBN to DNA damage sites by catalyzing 'Lys-6'-linked ubiquitination of NBN. Also recruited at DNA interstrand cross-links (ICLs) sites and catalyzes 'Lys-63'-linked ubiquitination of histones H2A and H2AX, leading to recruitment of FAAP20 and Fanconi anemia (FA) complex, followed by interstrand cross-link repair. H2A ubiquitination also mediates the ATM-dependent transcriptional silencing at regions flanking DSBs in cis, a mechanism to avoid collision between transcription and repair intermediates. Promotes the formation of 'Lys-63'-linked polyubiquitin chains via interactions with the specific ubiquitin-conjugating UBE2N/UBC13 and ubiquitinates non-histone substrates such as PCNA. Substrates that are polyubiquitinated at 'Lys-63' are usually not targeted for degradation. Also catalyzes the formation of 'Lys-48'-linked polyubiquitin chains via interaction with the ubiquitin-conjugating UBE2L6/UBCH8, leading to degradation of substrate proteins such as CHEK2, JMJD2A/KDM4A and KU80/XRCC5: it is still unclear how the preference toward 'Lys-48'- versus 'Lys-63'-linked ubiquitination is regulated but it could be due to RNF8 ability to interact with specific E2 specific ligases. For instance, interaction with phosphorylated HERC2 promotes the association between RNF8 and UBE2N/UBC13 and favors the specific formation of 'Lys-63'-linked ubiquitin chains. Promotes non-homologous end joining (NHEJ) by promoting the 'Lys-48'-linked ubiquitination and degradation the of KU80/XRCC5. Following DNA damage, mediates the ubiquitination and degradation of JMJD2A/KDM4A in collaboration with RNF168, leading to unmask H4K20me2 mark and promote the recruitment of TP53BP1 at DNA damage sites. Following DNA damage, mediates the ubiquitination and degradation of POLD4/p12, a subunit of DNA polymerase delta. In the absence of POLD4, DNA polymerase delta complex exhibits higher proofreading activity. In addition to its function in damage signaling, also plays a role in higher-order chromatin structure by mediating extensive chromatin decondensation. Involved in the activation of ATM by promoting histone H2B ubiquitination, which indirectly triggers histone H4 'Lys-16' acetylation (H4K16ac), establishing a chromatin environment that promotes efficient activation of ATM kinase. Required in the testis, where it plays a role in the replacement of histones during spermatogenesis. At uncapped telomeres, promotes the joining of deprotected chromosome ends by inducing H2A ubiquitination and TP53BP1 recruitment, suggesting that it may enhance cancer development by aggravating telomere-induced genome instability in case of telomeric crisis. Promotes the assembly of RAD51 at DNA DSBs in the absence of BRCA1 and TP53BP1 Also involved in class switch recombination in immune system, via its role in regulation of DSBs repair. May be required for proper exit from mitosis after spindle checkpoint activation and may regulate cytokinesis. May play a role in the regulation of RXRA-mediated transcriptional activity. Not involved in RXRA ubiquitination by UBE2E2. This chain is E3 ubiquitin-protein ligase RNF8, found in Mus musculus (Mouse).